Consider the following 146-residue polypeptide: Snaclec 5 (146 aa).

The N-terminal stretch at Met-1–Ala-23 is a signal peptide. Disulfide bonds link Cys-25–Cys-36, Cys-53–Cys-142, and Cys-119–Cys-134. The C-type lectin domain occupies Tyr-32–Lys-143.

This sequence belongs to the snaclec family. As to quaternary structure, heterodimer; disulfide-linked. In terms of tissue distribution, expressed by the venom gland.

It localises to the secreted. In terms of biological role, interferes with one step of hemostasis (modulation of platelet aggregation, or coagulation cascade, for example). This Echis pyramidum leakeyi (Leakey's carpet viper) protein is Snaclec 5.